We begin with the raw amino-acid sequence, 292 residues long: RNA 5'-monophosphate methyltransferase (292 aa).

Residues 1–20 (MAVPTELHGGSVKETAAEKE) form a disordered region. Residues Arg-46, Asn-76, Asp-110, 135-136 (DF), and Met-164 each bind S-adenosyl-L-methionine. The 222-residue stretch at 53 to 274 (ELLRQLFPES…KQTIETHPIP (222 aa)) folds into the Bin3-type SAM domain.

This sequence belongs to the methyltransferase superfamily. Interacts with DICER1; the interaction may be mediated by RNA.

The protein localises to the cytoplasm. It carries out the reaction a 5'-end 5'-phospho-ribonucleoside-RNA + S-adenosyl-L-methionine = a 5'-end (5'-methylphospho)-ribonucleoside-RNA + S-adenosyl-L-homocysteine. The enzyme catalyses a 5'-end 5'-phospho-ribonucleoside-RNA + 2 S-adenosyl-L-methionine = a 5'-end (5'-bismethylphospho)-ribonucleoside-RNA + 2 S-adenosyl-L-homocysteine. O-methyltransferase that specifically monomethylates 5'-monophosphate of cytoplasmic histidyl tRNA (tRNA(His)), acting as a capping enzyme by protecting tRNA(His) from cleavage by DICER1. Also able, with less efficiently, to methylate the 5' monophosphate of a subset of pre-miRNAs, acting as a negative regulator of miRNA processing. The 5' monophosphate of pre-miRNAs is recognized by DICER1 and is required for pre-miRNAs processing: methylation at this position reduces the processing of pre-miRNAs by DICER1. Was also reported to mediate dimethylation of pre-miR-145; however dimethylation cannot be reproduced by another group which observes a monomethylation of pre-miR-145. The chain is RNA 5'-monophosphate methyltransferase (BCDIN3D) from Pongo abelii (Sumatran orangutan).